Consider the following 437-residue polypeptide: MNYTTQMDAAKKGIVTKEMEIVAKKENMDVKDLMELISKGKVAIPANKNHKSLDPEGIGQGLRTKINVNLGISKDCYNIDMELEKVQKAIDMKAEAIMDLSCFGKTEEFRKRLIDMSPAIIGTVPIYDAVGFYDKELKDITSEEFLKVAEKHAENGADFLTIHVGMNRKTAATFKKNPRRMNIVSRGGSLLYAWMELNNKENPFYERFDELLDICEKYDVTLSLGDACRPGCIEDSTDASQIEELIALGELTKRAWERNVQVIIEGPGHMTLDEIETNMKIEKKLCHGAPFYVLGPIVTDIAPGYDHITSAIGGAIAATHGADFLCYVTPAEHLRLPNLDDMKEGIIASKIAAHAADLAKGVKGARDLDNAMAKARRDLDWERMFELSIDEEKARRYREESKAKSKDSCTMCGKMCAVRNMNRVTEGKDLNMLRDDD.

Residues N69, M98, Y127, H163, S185–G187, D226–R229, and E265 contribute to the substrate site. Zn(2+) is bound at residue H269. Substrate is bound at residue Y292. A Zn(2+)-binding site is contributed by H333. Residues C409, C412, and C416 each coordinate [4Fe-4S] cluster.

It belongs to the ThiC family. It depends on [4Fe-4S] cluster as a cofactor.

The enzyme catalyses 5-amino-1-(5-phospho-beta-D-ribosyl)imidazole + S-adenosyl-L-methionine = 4-amino-2-methyl-5-(phosphooxymethyl)pyrimidine + CO + 5'-deoxyadenosine + formate + L-methionine + 3 H(+). It functions in the pathway cofactor biosynthesis; thiamine diphosphate biosynthesis. In terms of biological role, catalyzes the synthesis of the hydroxymethylpyrimidine phosphate (HMP-P) moiety of thiamine from aminoimidazole ribotide (AIR) in a radical S-adenosyl-L-methionine (SAM)-dependent reaction. This Clostridium botulinum (strain 657 / Type Ba4) protein is Phosphomethylpyrimidine synthase.